We begin with the raw amino-acid sequence, 146 residues long: Deoxyuridine 5'-triphosphate nucleotidohydrolase (146 aa).

Residues 65 to 67, Asn78, 82 to 84, and Met92 contribute to the substrate site; these read RSG and LID.

The protein belongs to the dUTPase family. The cofactor is Mg(2+).

The catalysed reaction is dUTP + H2O = dUMP + diphosphate + H(+). The protein operates within pyrimidine metabolism; dUMP biosynthesis; dUMP from dCTP (dUTP route): step 2/2. This enzyme is involved in nucleotide metabolism: it produces dUMP, the immediate precursor of thymidine nucleotides and it decreases the intracellular concentration of dUTP so that uracil cannot be incorporated into DNA. This Thiobacillus denitrificans (strain ATCC 25259 / T1) protein is Deoxyuridine 5'-triphosphate nucleotidohydrolase.